We begin with the raw amino-acid sequence, 249 residues long: Leucyl/phenylalanyl-tRNA--protein transferase (249 aa).

The tract at residues 1–21 is disordered; that stretch reads MSRTLPHLLSSDPASPFPPAE.

It belongs to the L/F-transferase family.

The protein resides in the cytoplasm. The enzyme catalyses N-terminal L-lysyl-[protein] + L-leucyl-tRNA(Leu) = N-terminal L-leucyl-L-lysyl-[protein] + tRNA(Leu) + H(+). It carries out the reaction N-terminal L-arginyl-[protein] + L-leucyl-tRNA(Leu) = N-terminal L-leucyl-L-arginyl-[protein] + tRNA(Leu) + H(+). It catalyses the reaction L-phenylalanyl-tRNA(Phe) + an N-terminal L-alpha-aminoacyl-[protein] = an N-terminal L-phenylalanyl-L-alpha-aminoacyl-[protein] + tRNA(Phe). Functionally, functions in the N-end rule pathway of protein degradation where it conjugates Leu, Phe and, less efficiently, Met from aminoacyl-tRNAs to the N-termini of proteins containing an N-terminal arginine or lysine. This Xanthomonas campestris pv. campestris (strain 8004) protein is Leucyl/phenylalanyl-tRNA--protein transferase.